The following is a 77-amino-acid chain: U8-lycotoxin-Ls1m (77 aa).

A signal peptide spans 1–20 (MKLIIFTGLVLFSIVSLIEA). The propeptide occupies 21-26 (QAENEK).

Belongs to the neurotoxin 19 (CSTX) family. 08 (U8-Lctx) subfamily. In terms of processing, contains 4 disulfide bonds. As to expression, expressed by the venom gland.

Its subcellular location is the secreted. This chain is U8-lycotoxin-Ls1m, found in Lycosa singoriensis (Wolf spider).